A 264-amino-acid chain; its full sequence is Hydroxyethylthiazole kinase (264 aa).

M43 contributes to the substrate binding site. K119 and S165 together coordinate ATP. Residue G192 participates in substrate binding.

Belongs to the Thz kinase family. Mg(2+) serves as cofactor.

The enzyme catalyses 5-(2-hydroxyethyl)-4-methylthiazole + ATP = 4-methyl-5-(2-phosphooxyethyl)-thiazole + ADP + H(+). It participates in cofactor biosynthesis; thiamine diphosphate biosynthesis; 4-methyl-5-(2-phosphoethyl)-thiazole from 5-(2-hydroxyethyl)-4-methylthiazole: step 1/1. Catalyzes the phosphorylation of the hydroxyl group of 4-methyl-5-beta-hydroxyethylthiazole (THZ). This is Hydroxyethylthiazole kinase from Methanocorpusculum labreanum (strain ATCC 43576 / DSM 4855 / Z).